The following is a 237-amino-acid chain: MIFMVLGKIKSLLPNSQILTKVKIVDIRRKESEEGSIFYIGTMVDKDGVANFITTIPLERGKCYEIFGRITEEKSVRIVEKVIKGVKYPREIPEIPKEQLYNRGEVLDVKVPAILEVSQSTIFVNYYCKICRGIVDTKIKPRGLVYICRNCGEIDPEDVDVKIKVFGKIHFGTSSKRCYIPPATLEQFMPGILDMLEEYGIDDTIREICLKLNGKTFLVRGFEGKEGNYIITEMEDI.

This is an uncharacterized protein from Methanocaldococcus jannaschii (strain ATCC 43067 / DSM 2661 / JAL-1 / JCM 10045 / NBRC 100440) (Methanococcus jannaschii).